A 122-amino-acid chain; its full sequence is Holo-[acyl-carrier-protein] synthase (122 aa).

Asp-8 and Glu-57 together coordinate Mg(2+).

Belongs to the P-Pant transferase superfamily. AcpS family. Mg(2+) is required as a cofactor.

It is found in the cytoplasm. The enzyme catalyses apo-[ACP] + CoA = holo-[ACP] + adenosine 3',5'-bisphosphate + H(+). Transfers the 4'-phosphopantetheine moiety from coenzyme A to a Ser of acyl-carrier-protein. The protein is Holo-[acyl-carrier-protein] synthase of Exiguobacterium sp. (strain ATCC BAA-1283 / AT1b).